The chain runs to 227 residues: Peroxiredoxin-like 2A (227 aa).

Residues 13 to 111 (LWSISIGAFG…DQLGVPLYAV (99 aa)) are thioredoxin fold. Catalysis depends on redox-active residues Cys-84 and Cys-87.

The protein belongs to the peroxiredoxin-like PRXL2 family. PRXL2A subfamily.

Its subcellular location is the cytoplasm. Involved in redox regulation of the cell. Acts as an antioxidant. The polypeptide is Peroxiredoxin-like 2A (prxl2a) (Xenopus tropicalis (Western clawed frog)).